The chain runs to 153 residues: Putative pre-16S rRNA nuclease (153 aa).

The protein belongs to the YqgF nuclease family.

Its subcellular location is the cytoplasm. Could be a nuclease involved in processing of the 5'-end of pre-16S rRNA. This Prochlorococcus marinus (strain MIT 9215) protein is Putative pre-16S rRNA nuclease.